The following is a 403-amino-acid chain: 26S proteasome regulatory subunit 8 homolog (403 aa).

ATP is bound at residue 186 to 193 (GPPGTGKT).

Belongs to the AAA ATPase family.

It is found in the cytoplasm. The protein localises to the nucleus. Its function is as follows. The 26S proteasome is involved in the ATP-dependent degradation of ubiquitinated proteins. The regulatory (or ATPase) complex confers ATP dependency and substrate specificity to the 26S complex. The chain is 26S proteasome regulatory subunit 8 homolog (let1) from Schizosaccharomyces pombe (strain 972 / ATCC 24843) (Fission yeast).